The primary structure comprises 687 residues: Ribosomal RNA processing protein 1 homolog (687 aa).

Residues 288-298 (DEEDDEVNAEE) show a composition bias toward acidic residues. Disordered regions lie at residues 288–312 (DEED…RAGN) and 463–624 (VKEA…GSGK). 3 stretches are compositionally biased toward basic and acidic residues: residues 463–488 (VKEA…DQTK), 497–520 (PKND…EEPA), and 527–543 (HSKT…DEQP). A compositionally biased stretch (low complexity) spans 554 to 564 (KAKPTPKTKAA). The segment covering 596–608 (KQANSKLPQSTPK) has biased composition (polar residues). A phosphothreonine mark is found at T617 and T620. At S622 the chain carries Phosphoserine.

Belongs to the RRP1 family.

The protein localises to the nucleus. Its function is as follows. May be involved in the generation of 28S rRNA. The protein is Ribosomal RNA processing protein 1 homolog (Nnp-1) of Drosophila melanogaster (Fruit fly).